Here is a 312-residue protein sequence, read N- to C-terminus: Zinc-finger homeodomain protein 4 (312 aa).

Residues 20-74 (GGGGSHGHMIHHHDHHAANSAPPTHNNNNTTQPPPMPLHGNGHGNNYDHHHHQDP) are disordered. Over residues 37–50 (ANSAPPTHNNNNTT) the composition is skewed to low complexity. The ZF-HD dimerization-type; degenerate zinc-finger motif lies at 90–139 (YKECLKNHAAAMGGNATDGCGEFMPSGEDGSIEALTCSACNCHRNFHRKE). The segment at residues 218-281 (KKRFRTKFTP…NNKIHFSKKN (64 aa)) is a DNA-binding region (homeobox).

Homo- and heterodimer with other ZFHD proteins. Interacts with ZHD1, ZHD2, ZHD5, ZHD7, ZHD8, ZHD10 and ZHD11. As to expression, mostly expressed in flowers and inflorescence.

The protein localises to the nucleus. Its function is as follows. Putative transcription factor. Probably involved in the regulation of floral induction. In Arabidopsis thaliana (Mouse-ear cress), this protein is Zinc-finger homeodomain protein 4 (ZHD4).